Reading from the N-terminus, the 483-residue chain is Argininosuccinate lyase (483 aa).

The protein belongs to the lyase 1 family. Argininosuccinate lyase subfamily.

It localises to the cytoplasm. It carries out the reaction 2-(N(omega)-L-arginino)succinate = fumarate + L-arginine. Its pathway is amino-acid biosynthesis; L-arginine biosynthesis; L-arginine from L-ornithine and carbamoyl phosphate: step 3/3. In Albidiferax ferrireducens (strain ATCC BAA-621 / DSM 15236 / T118) (Rhodoferax ferrireducens), this protein is Argininosuccinate lyase.